The following is a 474-amino-acid chain: Serine/threonine-protein kinase VRK3 (474 aa).

Over residues 41 to 58 (HVSSFQGSKRGLNSSFET) the composition is skewed to polar residues. A disordered region spans residues 41–152 (HVSSFQGSKR…SRVTTSLEAL (112 aa)). A Nuclear localization signal motif is present at residues 49 to 64 (KRGLNSSFETSPKKVK). Phosphoserine is present on residues Ser-54, Ser-55, Ser-59, Ser-82, Ser-83, and Ser-90. Positions 88–101 (TLSSSERSKGSGSR) are enriched in low complexity. The span at 107-149 (SSPQKTRKSPQVTRGSPQKTSCSPQKTRQSPQTLKRSRVTTSL) shows a compositional bias: polar residues. Ser-108 carries the post-translational modification Phosphoserine; by CDK5. Ser-115 and Ser-122 each carry phosphoserine. Residues 166–457 (WKLKSFQTRD…MLRNNLEALL (292 aa)) form the Protein kinase domain.

The protein belongs to the protein kinase superfamily. CK1 Ser/Thr protein kinase family. VRK subfamily. In terms of assembly, interacts with DUSP3. Interacts with RAN. Interacts with HSP70/HSPA1A. In terms of processing, phosphorylated at Ser-108 by CDK5; leading to protection of the cell against H2O2-induced apoptosis. Ubiquitinated by RNF144A.

Its subcellular location is the nucleus. The protein localises to the cytoplasm. It carries out the reaction L-seryl-[protein] + ATP = O-phospho-L-seryl-[protein] + ADP + H(+). Functionally, plays a role in the regulation of the cell cycle by phosphorylating the nuclear envelope protein barrier-to-autointegration factor/BAF that is required for disassembly and reassembly, respectively, of the nuclear envelope during mitosis. Under normal physiological conditions, negatively regulates ERK activity along with VHR/DUSP3 phosphatase in the nucleus, causing timely and transient action of ERK. Stress conditions activate CDK5 which phosphorylates VRK3 to increase VHR phosphatase activity and suppress prolonged ERK activation that causes cell death. For example, upon glutamate induction, promotes nuclear localization of HSP70/HSPA1A to inhibit ERK activation via VHR/DUSP3 phosphatase. The chain is Serine/threonine-protein kinase VRK3 (VRK3) from Homo sapiens (Human).